Here is a 479-residue protein sequence, read N- to C-terminus: Ribosomal RNA small subunit methyltransferase F (479 aa).

S-adenosyl-L-methionine is bound by residues 125 to 131 (AAAPGSK), Glu-149, Asp-176, and Asp-194. Cys-247 serves as the catalytic Nucleophile.

This sequence belongs to the class I-like SAM-binding methyltransferase superfamily. RsmB/NOP family.

It is found in the cytoplasm. It catalyses the reaction cytidine(1407) in 16S rRNA + S-adenosyl-L-methionine = 5-methylcytidine(1407) in 16S rRNA + S-adenosyl-L-homocysteine + H(+). In terms of biological role, specifically methylates the cytosine at position 1407 (m5C1407) of 16S rRNA. This chain is Ribosomal RNA small subunit methyltransferase F, found in Salmonella paratyphi C (strain RKS4594).